The sequence spans 125 residues: Probable prefoldin subunit 6 (125 aa).

Belongs to the prefoldin subunit beta family. As to quaternary structure, heterohexamer of two PFD-alpha type and four PFD-beta type subunits.

In terms of biological role, binds specifically to cytosolic chaperonin (c-CPN) and transfers target proteins to it. Binds to nascent polypeptide chain and promotes folding in an environment in which there are many competing pathways for nonnative proteins. This chain is Probable prefoldin subunit 6, found in Drosophila melanogaster (Fruit fly).